Here is a 571-residue protein sequence, read N- to C-terminus: ATP-dependent RNA helicase RhlB (571 aa).

Positions valine 9–alanine 37 match the Q motif motif. One can recognise a Helicase ATP-binding domain in the interval leucine 40 to leucine 220. Alanine 53–threonine 60 is an ATP binding site. The DEAD box signature appears at aspartate 166–aspartate 169. Positions arginine 231–leucine 393 constitute a Helicase C-terminal domain. Positions threonine 391–serine 558 are disordered. Positions glutamate 402–glycine 411 are enriched in acidic residues. Residues arginine 419 to arginine 432 are compositionally biased toward basic and acidic residues. The segment covering glycine 435–glycine 448 has biased composition (gly residues). Residues glycine 449 to proline 460 show a composition bias toward basic and acidic residues. A compositionally biased stretch (low complexity) spans valine 483–alanine 497. Basic residues predominate over residues proline 503–glycine 512. Over residues valine 539–serine 558 the composition is skewed to low complexity.

The protein belongs to the DEAD box helicase family. RhlB subfamily. As to quaternary structure, component of the RNA degradosome, which is a multiprotein complex involved in RNA processing and mRNA degradation.

Its subcellular location is the cytoplasm. The catalysed reaction is ATP + H2O = ADP + phosphate + H(+). Its function is as follows. DEAD-box RNA helicase involved in RNA degradation. Has RNA-dependent ATPase activity and unwinds double-stranded RNA. The chain is ATP-dependent RNA helicase RhlB from Xanthomonas axonopodis pv. citri (strain 306).